Consider the following 1096-residue polypeptide: Eukaryotic translation initiation factor 3 subunit A (1096 aa).

Positions 323–502 constitute a PCI domain; the sequence is QATRVLLATL…GSIHFGAADA (180 aa). Coiled coils occupy residues 591–643, 677–761, and 811–839; these read SERQ…IDRK, SVLR…RMQK, and KEGA…ERRA. Positions 808 to 852 are enriched in basic and acidic residues; the sequence is ELPKEGAEERMASAREVAEQTRRDEQEKERRAVRESQRPSKREIV. The tract at residues 808 to 1096 is disordered; that stretch reads ELPKEGAEER…ADDDRNWRQK (289 aa). Polar residues predominate over residues 865 to 875; sequence AQPTQPRTISS. Composition is skewed to basic and acidic residues over residues 878–890, 933–942, and 955–973; these read FGER…RYRE, SNREQARGEA, and QRDR…KRGE. The segment covering 1008 to 1023 has biased composition (polar residues); it reads DSSQRTSAATPTTQPW. Over residues 1085–1096 the composition is skewed to basic and acidic residues; sequence GAADDDRNWRQK.

The protein belongs to the eIF-3 subunit A family. Component of the eukaryotic translation initiation factor 3 (eIF-3) complex.

It is found in the cytoplasm. Its function is as follows. RNA-binding component of the eukaryotic translation initiation factor 3 (eIF-3) complex, which is involved in protein synthesis of a specialized repertoire of mRNAs and, together with other initiation factors, stimulates binding of mRNA and methionyl-tRNAi to the 40S ribosome. The eIF-3 complex specifically targets and initiates translation of a subset of mRNAs involved in cell proliferation. The protein is Eukaryotic translation initiation factor 3 subunit A of Brugia malayi (Filarial nematode worm).